The sequence spans 79 residues: Acyl carrier protein (79 aa).

Positions 2–77 (SDIEARVRKI…SAIDYANTHQ (76 aa)) constitute a Carrier domain. Ser-37 is modified (O-(pantetheine 4'-phosphoryl)serine).

This sequence belongs to the acyl carrier protein (ACP) family. In terms of processing, 4'-phosphopantetheine is transferred from CoA to a specific serine of apo-ACP by AcpS. This modification is essential for activity because fatty acids are bound in thioester linkage to the sulfhydryl of the prosthetic group.

The protein localises to the cytoplasm. Its pathway is lipid metabolism; fatty acid biosynthesis. Functionally, carrier of the growing fatty acid chain in fatty acid biosynthesis. The chain is Acyl carrier protein from Verminephrobacter eiseniae (strain EF01-2).